Reading from the N-terminus, the 330-residue chain is Methionine import ATP-binding protein MetN (330 aa).

Residues 2 to 241 (IAFRGVSKVY…PSTRLHQLCF (240 aa)) form the ABC transporter domain. 38 to 45 (GQSGAGKS) provides a ligand contact to ATP.

It belongs to the ABC transporter superfamily. Methionine importer (TC 3.A.1.24) family. In terms of assembly, the complex is composed of two ATP-binding proteins (MetN), two transmembrane proteins (MetI) and a solute-binding protein (MetQ).

Its subcellular location is the cell inner membrane. It catalyses the reaction L-methionine(out) + ATP + H2O = L-methionine(in) + ADP + phosphate + H(+). The enzyme catalyses D-methionine(out) + ATP + H2O = D-methionine(in) + ADP + phosphate + H(+). Functionally, part of the ABC transporter complex MetNIQ involved in methionine import. Responsible for energy coupling to the transport system. The sequence is that of Methionine import ATP-binding protein MetN from Myxococcus xanthus (strain DK1622).